A 276-amino-acid chain; its full sequence is Small ribosomal subunit protein uS3 (276 aa).

Positions 17–86 (VDEYLAKELD…NPQIDVQDVG (70 aa)) constitute a KH type-2 domain. Residues 193-276 (FQINAPPKEP…AETHGDIQDR (84 aa)) form a disordered region. Low complexity predominate over residues 214 to 227 (EAEPSQAAETQEQQ). 2 stretches are compositionally biased toward basic and acidic residues: residues 228-240 (AGEK…RLLD) and 258-276 (PESR…IQDR).

This sequence belongs to the universal ribosomal protein uS3 family. As to quaternary structure, part of the 30S ribosomal subunit.

Its function is as follows. Binds the lower part of the 30S subunit head. This Methanothrix thermoacetophila (strain DSM 6194 / JCM 14653 / NBRC 101360 / PT) (Methanosaeta thermophila) protein is Small ribosomal subunit protein uS3.